Reading from the N-terminus, the 402-residue chain is Tol-Pal system protein TolB (402 aa).

Positions 1-17 are cleaved as a signal peptide; the sequence is MKKIVAIFLVFLGSLWA.

This sequence belongs to the TolB family. In terms of assembly, the Tol-Pal system is composed of five core proteins: the inner membrane proteins TolA, TolQ and TolR, the periplasmic protein TolB and the outer membrane protein Pal. They form a network linking the inner and outer membranes and the peptidoglycan layer.

It is found in the periplasm. In terms of biological role, part of the Tol-Pal system, which plays a role in outer membrane invagination during cell division and is important for maintaining outer membrane integrity. The chain is Tol-Pal system protein TolB from Campylobacter jejuni (strain RM1221).